Consider the following 202-residue polypeptide: Keratin-associated protein 5-10 (202 aa).

Tandem repeats lie at residues 48-51 (CCKP), 54-57 (CCVP), 144-147 (CCKP), 162-165 (CCNP), 172-175 (CCVP), 182-185 (CCKP), and 192-195 (CCVP). The segment at 48-195 (CCKPVCCCVP…CCCQSSCCVP (148 aa)) is 7 X 4 AA repeats of C-C-X-P.

Belongs to the KRTAP type 5 family. In terms of assembly, interacts with hair keratins. Expressed in hair root but not in skin. Expressed also in brain and skeletal muscle.

In terms of biological role, in the hair cortex, hair keratin intermediate filaments are embedded in an interfilamentous matrix, consisting of hair keratin-associated protein (KRTAP), which are essential for the formation of a rigid and resistant hair shaft through their extensive disulfide bond cross-linking with abundant cysteine residues of hair keratins. The matrix proteins include the high-sulfur and high-glycine-tyrosine keratins. This chain is Keratin-associated protein 5-10 (KRTAP5-10), found in Homo sapiens (Human).